The following is a 275-amino-acid chain: Gap junction gamma-3 protein (275 aa).

The Cytoplasmic portion of the chain corresponds to Met-1–Arg-22. A helical transmembrane segment spans residues Leu-23 to Val-43. Residues Phe-44–Arg-77 lie on the Extracellular side of the membrane. Residues Phe-78–Leu-98 form a helical membrane-spanning segment. Over Tyr-99–Arg-134 the chain is Cytoplasmic. The chain crosses the membrane as a helical span at residues Leu-135–Gly-155. The Extracellular portion of the chain corresponds to Gly-156–Thr-196. A helical transmembrane segment spans residues Met-197–Leu-217. Residues Gly-218 to Pro-275 lie on the Cytoplasmic side of the membrane. The span at Glu-254 to Ser-267 shows a compositional bias: basic and acidic residues. Residues Glu-254 to Pro-275 form a disordered region.

This sequence belongs to the connexin family. Gamma-type subfamily. A connexon is composed of a hexamer of connexins.

Its subcellular location is the cell membrane. The protein localises to the cell junction. It is found in the gap junction. Its function is as follows. One gap junction consists of a cluster of closely packed pairs of transmembrane channels, the connexons, through which materials of low MW diffuse from one cell to a neighboring cell. The protein is Gap junction gamma-3 protein (GJC3) of Bos taurus (Bovine).